A 161-amino-acid polypeptide reads, in one-letter code: S-ribosylhomocysteine lyase (161 aa).

Residues His57, His61, and Cys127 each contribute to the Fe cation site.

This sequence belongs to the LuxS family. Homodimer. Fe cation is required as a cofactor.

It catalyses the reaction S-(5-deoxy-D-ribos-5-yl)-L-homocysteine = (S)-4,5-dihydroxypentane-2,3-dione + L-homocysteine. Functionally, involved in the synthesis of autoinducer 2 (AI-2) which is secreted by bacteria and is used to communicate both the cell density and the metabolic potential of the environment. The regulation of gene expression in response to changes in cell density is called quorum sensing. Catalyzes the transformation of S-ribosylhomocysteine (RHC) to homocysteine (HC) and 4,5-dihydroxy-2,3-pentadione (DPD). The polypeptide is S-ribosylhomocysteine lyase (Streptococcus equi subsp. equi (strain 4047)).